The sequence spans 173 residues: Small ribosomal subunit protein uS9 (173 aa).

Residues 1–15 are compositionally biased toward polar residues; that stretch reads MTDTPTENLENTEVT. Disordered regions lie at residues 1–26 and 135–173; these read MTDTPTENLENTEVTPFTEGDREIAY and EASRPALKKAGMLTRDARVKERKKAGLKKARKAPQYSKR. Positions 154–173 are enriched in basic residues; sequence KERKKAGLKKARKAPQYSKR.

It belongs to the universal ribosomal protein uS9 family.

This chain is Small ribosomal subunit protein uS9, found in Cutibacterium acnes (strain DSM 16379 / KPA171202) (Propionibacterium acnes).